The following is a 160-amino-acid chain: Eosinophil cationic protein (160 aa).

An N-terminal signal peptide occupies residues Met1–Ala27. Positions Arg28–Arg72 are required for nearly all of the bactericidal activities; partially involved in LPS-binding. The Proton acceptor role is filled by His42. Disulfide bonds link Cys50–Cys110, Cys64–Cys123, Cys82–Cys138, and Cys89–Cys98. At Tyr60 the chain carries 3'-nitrotyrosine. Residue Lys65–Thr69 coordinates substrate. N-linked (GlcNAc...) asparagine glycans are attached at residues Asn84, Asn92, and Asn119. Catalysis depends on His155, which acts as the Proton donor.

It belongs to the pancreatic ribonuclease family. In terms of assembly, interacts with bacterial lipopolysaccharide (LPS) and lipoteichoic acid (LTA). In vitro interacts with phospholipid bilayers.

It localises to the secreted. Its function is as follows. Cytotoxin and helminthotoxin with low-efficiency ribonuclease activity. Possesses a wide variety of biological activities. Exhibits antibacterial activity. The chain is Eosinophil cationic protein (RNASE3) from Gorilla gorilla gorilla (Western lowland gorilla).